The following is a 254-amino-acid chain: Gamma-glutamyl-gamma-aminobutyrate hydrolase PuuD (254 aa).

Residues 16–250 (RNRLKGHATQ…ITACQHHIAE (235 aa)) form the Glutamine amidotransferase type-1 domain. Cys114 acts as the Nucleophile in catalysis. Active-site residues include His222 and Glu224.

Belongs to the peptidase C26 family. As to quaternary structure, homodimer.

It catalyses the reaction 4-(gamma-L-glutamylamino)butanoate + H2O = 4-aminobutanoate + L-glutamate. Its pathway is amine and polyamine degradation; putrescine degradation; 4-aminobutanoate from putrescine: step 4/4. Functionally, involved in the breakdown of putrescine via hydrolysis of the gamma-glutamyl linkage of gamma-glutamyl-gamma-aminobutyrate. This chain is Gamma-glutamyl-gamma-aminobutyrate hydrolase PuuD (puuD), found in Escherichia coli (strain K12).